The chain runs to 325 residues: Solute carrier family 35 member B1 (325 aa).

8 helical membrane-spanning segments follow: residues 18-38, 54-74, 88-108, 139-159, 171-191, 213-233, 246-266, and 288-308; these read PVCF…QESI, FALS…KLLI, WLYA…NSAL, YPLA…LFMY, IFGY…LTGV, LWST…WEFL, ILLF…TVVY, and VILF…LVFL. The short motif at 321 to 325 is the Di-lysine motif element; it reads KKTSH.

This sequence belongs to the nucleotide-sugar transporter family. SLC35B subfamily.

It is found in the endoplasmic reticulum membrane. Probable sugar transporter. The chain is Solute carrier family 35 member B1 (SLC35B1) from Gallus gallus (Chicken).